The chain runs to 1270 residues: Vigilin (1270 aa).

Polar residues predominate over residues 1–11; it reads MSSVAVLTQES. Disordered regions lie at residues 1–23 and 28–47; these read MSSV…TQQQ and ALNS…FPPL. KH domains are found at residues 150–188, 219–260, 291–333, 360–402, 431–473, 504–545, 577–619, 651–693, 724–766, 798–840, and 872–913; these read ASAT…IPRP, DKRA…IPPP, KKKT…IPPT, ANSF…EFTE, INRT…IPPD, ENER…NFPD, VENS…LPGR, ANIT…FPTE, QTKS…FPTS, DNVV…LPTV, and EAQV…FPDR. A disordered region spans residues 911–947; it reads PDREENPAPVAEPALQENGEEGGEGKDGKDADPSSPR. A compositionally biased stretch (basic and acidic residues) spans 933–947; it reads GEGKDGKDADPSSPR. KH domains are found at residues 970-1012, 1051-1093, and 1126-1168; these read ALVP…VPAP, ALRS…FPDK, and LEQM…FPQS. Residues 1217 to 1270 form a disordered region; the sequence is SHEESKVPSKGFVVRDAPCGTVNNEKAPDMSSSEDFPSFGAQVAPKTLPWGPKR.

It is found in the cytoplasm. This Gallus gallus (Chicken) protein is Vigilin (HDLBP).